Here is a 340-residue protein sequence, read N- to C-terminus: Functional amyloid subunit FapC (340 aa).

Positions 1-24 (MKATMVLTPLALAMAAVLSVSAYA) are cleaved as a signal peptide. One copy of the FapC_R1 repeat lies at 67-100 (NNASVSGSIKDASGNVGVNVAAGDNNQQANAAAL). Residues 101–133 (ASADASFVFGTATASTSVLQSGYGNTLNNYSNP) are linker 1. A FapC_R2 repeat occupies 134–167 (NTASLSNSANNVSGNLGVNVAAGNFNQQKNDLAA). Residues 168–290 (AVSNGQYSTA…AIVGFKTPVT (123 aa)) form a linker 2 region. Residues 291–324 (NNASLSNSLQNVSGNVGVNIAAGGGNQQSNSLSI) form a FapC_R3 repeat. The short motif at 328–331 (CSSC) is the Cys-X-X-Cys element.

The protein belongs to the FapB/FapC family. As to quaternary structure, the major component of purified amyloid fibrils. Fibrils are resistant to boiling in 2% (weight/vol) SDS and require &gt;90% (vol/vol) formic acid to dissolve. Interacts with FapA in vitro.

It localises to the fimbrium. It is found in the secreted. The major functional amyloid subunit in this bacterium. Upon overexpression of the endogenous six-gene locus (fapA-fapF), cells form large clumps during liquid growth, make large amounts of biofilm and produce amyloid fibrils. In Pseudomonas aeruginosa (strain ATCC 15692 / DSM 22644 / CIP 104116 / JCM 14847 / LMG 12228 / 1C / PRS 101 / PAO1), this protein is Functional amyloid subunit FapC.